Consider the following 202-residue polypeptide: Secreted RxLR effector protein 93 (202 aa).

Positions 1–16 (MRFYLTKLFAAAGALA) are cleaved as a signal peptide. Residues 29–58 (TPVSPLSRSSDHHQSDDSTQRRLRTLNGAD) form a disordered region. Positions 37–48 (SSDHHQSDDSTQ) are enriched in basic and acidic residues. The RxLR-dEER signature appears at 49-61 (RRLRTLNGADEER).

This sequence belongs to the RxLR effector family.

Its subcellular location is the secreted. The protein localises to the host nucleus. Secreted effector that completely suppresses the host cell death induced by cell death-inducing proteins. This Plasmopara viticola (Downy mildew of grapevine) protein is Secreted RxLR effector protein 93.